The chain runs to 458 residues: Phosphoglucosamine mutase (458 aa).

S106 functions as the Phosphoserine intermediate in the catalytic mechanism. S106, D247, D249, and D251 together coordinate Mg(2+). The residue at position 106 (S106) is a Phosphoserine.

It belongs to the phosphohexose mutase family. Mg(2+) is required as a cofactor. Post-translationally, activated by phosphorylation.

It carries out the reaction alpha-D-glucosamine 1-phosphate = D-glucosamine 6-phosphate. In terms of biological role, catalyzes the conversion of glucosamine-6-phosphate to glucosamine-1-phosphate. The polypeptide is Phosphoglucosamine mutase (Chlamydia felis (strain Fe/C-56) (Chlamydophila felis)).